The chain runs to 559 residues: Probable D-2-hydroxyglutarate dehydrogenase, mitochondrial (559 aa).

Residues 1 to 80 constitute a mitochondrion transit peptide; that stretch reads MARRAAAGLL…MNFEVQKRSF (80 aa). The region spanning 131 to 310 is the FAD-binding PCMH-type domain; sequence YKGSSQLLLL…TKIAILTPAK (180 aa).

This sequence belongs to the FAD-binding oxidoreductase/transferase type 4 family. Homodimer. Requires FAD as cofactor.

It is found in the mitochondrion. The catalysed reaction is (R)-2-hydroxyglutarate + A = 2-oxoglutarate + AH2. Functionally, catalyzes the oxidation of D-2-hydroxyglutarate to alpha-ketoglutarate. This is Probable D-2-hydroxyglutarate dehydrogenase, mitochondrial (D2HGDH) from Oryza sativa subsp. indica (Rice).